A 373-amino-acid chain; its full sequence is 2-phosphonomethylmalate synthase (373 aa).

Positions 5–256 (LVLEDTTLRD…DLGIDLTKLK (252 aa)) constitute a Pyruvate carboxyltransferase domain.

This sequence belongs to the alpha-IPM synthase/homocitrate synthase family.

It catalyses the reaction 3-phosphonopyruvate + acetyl-CoA + H2O = (R)-2-(phosphonomethyl)malate + CoA + H(+). It functions in the pathway antibiotic biosynthesis. Acyltransferase involved in the biosynthesis of the phosphonate antibiotic FR-900098, a potent antimalarial agent that acts as an inhibitor of 1-deoxy-D-xylulose 5-phosphate reductoisomerase (DXR), the first enzyme in the nonmevalonate pathway for isoprenoid biosynthesis. Catalyzes the condensation between acetyl-CoA and phosphonopyruvate to yield (R)-2-(phosphonomethyl)malate. The sequence is that of 2-phosphonomethylmalate synthase from Streptomyces rubellomurinus (strain ATCC 31215).